Here is a 40-residue protein sequence, read N- to C-terminus: Photosystem II reaction center protein J (40 aa).

Residues 8–28 traverse the membrane as a helical segment; sequence IPLWLIGTVVGTPVISLVGIF.

It belongs to the PsbJ family. As to quaternary structure, PSII is composed of 1 copy each of membrane proteins PsbA, PsbB, PsbC, PsbD, PsbE, PsbF, PsbH, PsbI, PsbJ, PsbK, PsbL, PsbM, PsbT, PsbX, PsbY, PsbZ, Psb30/Ycf12, at least 3 peripheral proteins of the oxygen-evolving complex and a large number of cofactors. It forms dimeric complexes.

It is found in the plastid. Its subcellular location is the chloroplast thylakoid membrane. In terms of biological role, one of the components of the core complex of photosystem II (PSII). PSII is a light-driven water:plastoquinone oxidoreductase that uses light energy to abstract electrons from H(2)O, generating O(2) and a proton gradient subsequently used for ATP formation. It consists of a core antenna complex that captures photons, and an electron transfer chain that converts photonic excitation into a charge separation. The polypeptide is Photosystem II reaction center protein J (Huperzia lucidula (Shining clubmoss)).